The primary structure comprises 101 residues: MAKKSAIEKNNRRKKMTKNAAPKRARLKAIIADKSKPMEERFAATLKLAEMPRNSSATRIRNRCDLTGRPRSVYRLNKLSRIAIRDLGSRGLVLGLVKSSW.

The span at 1–10 (MAKKSAIEKN) shows a compositional bias: basic and acidic residues. Residues 1-23 (MAKKSAIEKNNRRKKMTKNAAPK) form a disordered region. The segment covering 11–23 (NRRKKMTKNAAPK) has biased composition (basic residues).

In terms of assembly, part of the 30S ribosomal subunit. Contacts proteins S3 and S10.

Its function is as follows. Binds 16S rRNA, required for the assembly of 30S particles and may also be responsible for determining the conformation of the 16S rRNA at the A site. This is Small ribosomal subunit protein uS14 from Rhodopseudomonas palustris (strain ATCC BAA-98 / CGA009).